A 630-amino-acid chain; its full sequence is Molybdenum cofactor biosynthesis protein 1 (630 aa).

Residues 61–298 (RFNRHHTYLR…SKTYHVPGFK (238 aa)) form the Radical SAM core domain. Residue arginine 70 participates in GTP binding. Cysteine 77 and cysteine 81 together coordinate [4Fe-4S] cluster. Tyrosine 83 lines the S-adenosyl-L-methionine pocket. Position 84 (cysteine 84) interacts with [4Fe-4S] cluster. Residue arginine 120 participates in GTP binding. An S-adenosyl-L-methionine-binding site is contributed by glycine 124. Position 151 (threonine 151) interacts with GTP. Residue serine 175 participates in S-adenosyl-L-methionine binding. Lysine 212 lines the GTP pocket. Methionine 246 contributes to the S-adenosyl-L-methionine binding site. [4Fe-4S] cluster contacts are provided by cysteine 312 and cysteine 315. GTP is bound at residue 317-319 (RLR). A [4Fe-4S] cluster-binding site is contributed by cysteine 329. A molybdenum cofactor biosynthesis protein C region spans residues 402–629 (KEVKNYLLKL…GGKSSSPQIT (228 aa)). The For molybdenum cofactor biosynthesis protein C activity role is filled by aspartate 599.

The protein in the C-terminal section; belongs to the MoaC family. It in the N-terminal section; belongs to the radical SAM superfamily. MoaA family. Isoform mocs1a and isoform mocs1b probably form a heterooligomer. It depends on [4Fe-4S] cluster as a cofactor.

The enzyme catalyses GTP + AH2 + S-adenosyl-L-methionine = (8S)-3',8-cyclo-7,8-dihydroguanosine 5'-triphosphate + 5'-deoxyadenosine + L-methionine + A + H(+). It carries out the reaction (8S)-3',8-cyclo-7,8-dihydroguanosine 5'-triphosphate = cyclic pyranopterin phosphate + diphosphate. It participates in cofactor biosynthesis; molybdopterin biosynthesis. Isoform mocs1a and isoform mocs1b probably form a complex that catalyzes the conversion of 5'-GTP to cyclic pyranopterin monophosphate (cPMP). mocs1a catalyzes the cyclization of GTP to (8S)-3',8-cyclo-7,8-dihydroguanosine 5'-triphosphate and mocs1b catalyzes the subsequent conversion of (8S)-3',8-cyclo-7,8-dihydroguanosine 5'-triphosphate to cPMP. This is Molybdenum cofactor biosynthesis protein 1 (mocs1) from Dictyostelium discoideum (Social amoeba).